A 241-amino-acid chain; its full sequence is Eukaryotic translation initiation factor 3 subunit J (241 aa).

The segment at 1 to 94 is disordered; the sequence is MDVSWDADNF…EKTAEEMTPE (94 aa). Residues 26 to 45 show a composition bias toward acidic residues; sequence GEDEDDNVKESWEDEEEEKK. Positions 61–118 form a coiled coil; it reads KKKIHDKIAERERQEREKAERLVTEKTAEEMTPEQKLAEKLRQQKLQEESDLRLAMET. The span at 66–89 shows a compositional bias: basic and acidic residues; the sequence is DKIAERERQEREKAERLVTEKTAE.

This sequence belongs to the eIF-3 subunit J family. In terms of assembly, component of the eukaryotic translation initiation factor 3 (eIF-3) complex.

Its subcellular location is the cytoplasm. In terms of biological role, component of the eukaryotic translation initiation factor 3 (eIF-3) complex, which is involved in protein synthesis of a specialized repertoire of mRNAs and, together with other initiation factors, stimulates binding of mRNA and methionyl-tRNAi to the 40S ribosome. The eIF-3 complex specifically targets and initiates translation of a subset of mRNAs involved in cell proliferation. The sequence is that of Eukaryotic translation initiation factor 3 subunit J from Bombyx mori (Silk moth).